The chain runs to 360 residues: 3-isopropylmalate dehydrogenase (360 aa).

Position 76 to 89 (76 to 89) interacts with NAD(+); the sequence is GPKWDTIERDIRPE. Substrate is bound by residues Arg96, Arg106, Arg134, and Asp224. The Mg(2+) site is built by Asp224, Asp248, and Asp252. Residue 282–294 coordinates NAD(+); sequence GSAPDIAGKGIAN.

The protein belongs to the isocitrate and isopropylmalate dehydrogenases family. LeuB type 1 subfamily. Homodimer. Mg(2+) is required as a cofactor. The cofactor is Mn(2+).

It localises to the cytoplasm. It catalyses the reaction (2R,3S)-3-isopropylmalate + NAD(+) = 4-methyl-2-oxopentanoate + CO2 + NADH. The protein operates within amino-acid biosynthesis; L-leucine biosynthesis; L-leucine from 3-methyl-2-oxobutanoate: step 3/4. Its function is as follows. Catalyzes the oxidation of 3-carboxy-2-hydroxy-4-methylpentanoate (3-isopropylmalate) to 3-carboxy-4-methyl-2-oxopentanoate. The product decarboxylates to 4-methyl-2 oxopentanoate. This chain is 3-isopropylmalate dehydrogenase, found in Pseudomonas syringae pv. syringae (strain B728a).